We begin with the raw amino-acid sequence, 383 residues long: Adaptive-response sensory kinase SasA (383 aa).

The region spanning 152 to 365 (MVAHELRTPL…CFTFNVPIWQ (214 aa)) is the Histidine kinase domain. His155 is modified (phosphohistidine; by autocatalysis).

Homooligomerizes. Interacts with KaiC. Participates in the KaiABC clock complex, whose core is composed of a KaiC homohexamer, 6 KaiB and up to 6 KaiA dimers. SasA and KaiB(fs) compete to bind to KaiC.

The catalysed reaction is ATP + protein L-histidine = ADP + protein N-phospho-L-histidine.. Member of the two-component regulatory system SasA/RpaA involved in genome-wide circadian gene expression. One of several clock output pathways. Participates in the Kai clock protein complex, the main circadian regulator in cyanobacteria, via its interaction with KaiC. KaiC enhances the autophosphorylation activity of SasA, which then transfers its phosphate group to RpaA to activate it. In addition to its output function, recruits fold-shifted KaiB (KaiB(fs)) to KaiC to cooperatively form the KaiB(6):KaiC(6) complex (independent of SasA kinase activity). Required for robustness of the circadian rhythm of gene expression and is involved in clock output, also required for adaptation to light/dark cycles. The polypeptide is Adaptive-response sensory kinase SasA (Synechococcus sp. (strain CC9311)).